Consider the following 213-residue polypeptide: uncharacterized protein (213 aa).

Glycine 53, glutamate 74, and aspartate 97 together coordinate S-adenosyl-L-methionine.

Belongs to the methyltransferase superfamily. YrrT family.

Functionally, could be a S-adenosyl-L-methionine-dependent methyltransferase. This is an uncharacterized protein from Bacillus subtilis (strain 168).